The primary structure comprises 1249 residues: Myosin-1 (1249 aa).

The disordered stretch occupies residues 1 to 40 (MGHSRRPAGGEKKSRFGRSKAAADVGDGRQAGGKPQVRKA). One can recognise a Myosin motor domain in the interval 50–729 (IGVSDLTLLS…TLFALEAMRD (680 aa)). 143–150 (GESGAGKT) contributes to the ATP binding site. The residue at position 371 (S371) is a Phosphoserine. The interval 418–500 (SIGILDIYGF…PGVFAALNDA (83 aa)) is actin-binding. 2 IQ domains span residues 733–753 (HNMAIRIQRAWRNYLRYRTEC) and 754–779 (AIRIQRFWRRMNGGLELLKLRDQGHT). The 193-residue stretch at 787-979 (RRRMSILGSR…PGEPPNSVSK (193 aa)) folds into the TH1 domain. 2 disordered regions span residues 959–1081 (DSYK…KAKA) and 1127–1249 (EAYL…DDDW). Low complexity-rich tracts occupy residues 1026–1035 (PQTAAAQPTP) and 1043–1061 (PVAAVAASHSRTSSTASAR). Residues 1062–1073 (APPPPPPAPPAA) show a composition bias toward pro residues. In terms of domain architecture, SH3 spans 1074 to 1135 (AGPKKAKALY…PEAYLEEQVA (62 aa)). Residues 1137–1149 (TPKPAPPPPPPVA) are compositionally biased toward pro residues. A compositionally biased stretch (low complexity) spans 1150–1170 (PRASPAPVNGSAAVAAAKAKA). Polar residues predominate over residues 1199 to 1221 (VSMNSQGDSSGASGRGTPSSVSN). A compositionally biased stretch (low complexity) spans 1222-1235 (ASLAGGLAEALRAR).

This sequence belongs to the TRAFAC class myosin-kinesin ATPase superfamily. Myosin family. Interacts (via IQ domains) with camA. In terms of processing, phosphorylation of the TEDS site (Ser-371) is required for the polarization of the actin cytoskeleton. Phosphorylation probably activates the myosin-I ATPase activity.

Its subcellular location is the cytoplasm. The protein localises to the cytoskeleton. It is found in the actin patch. Its function is as follows. Type-I myosin implicated in the organization of the actin cytoskeleton. Required for proper actin cytoskeleton polarization. At the cell cortex, assembles in patch-like structures together with proteins from the actin-polymerizing machinery and promotes actin assembly. Functions as actin nucleation-promoting factor (NPF) for the Arp2/3 complex. Plays an important role in polarized growth, spore germination, hyphal morphogenesis, and septal wall formation. This Emericella nidulans (strain FGSC A4 / ATCC 38163 / CBS 112.46 / NRRL 194 / M139) (Aspergillus nidulans) protein is Myosin-1 (myoA).